The sequence spans 147 residues: Nucleoside diphosphate kinase (147 aa).

Residues Lys-9, Phe-57, Arg-85, Thr-91, Arg-102, and Asn-112 each contribute to the ATP site. His-115 functions as the Pros-phosphohistidine intermediate in the catalytic mechanism.

Belongs to the NDK family. In terms of assembly, homotetramer. Mg(2+) serves as cofactor.

The protein localises to the cytoplasm. The catalysed reaction is a 2'-deoxyribonucleoside 5'-diphosphate + ATP = a 2'-deoxyribonucleoside 5'-triphosphate + ADP. It catalyses the reaction a ribonucleoside 5'-diphosphate + ATP = a ribonucleoside 5'-triphosphate + ADP. Major role in the synthesis of nucleoside triphosphates other than ATP. The ATP gamma phosphate is transferred to the NDP beta phosphate via a ping-pong mechanism, using a phosphorylated active-site intermediate. The chain is Nucleoside diphosphate kinase from Fervidobacterium nodosum (strain ATCC 35602 / DSM 5306 / Rt17-B1).